A 563-amino-acid polypeptide reads, in one-letter code: Kelch repeat and BTB domain-containing protein 1 (563 aa).

One can recognise a BTB domain in the interval 21–88 (CDINIVINDE…IYGIPLSLTN (68 aa)). One can recognise a BACK domain in the interval 123 to 219 (CIDFYIYADK…SLLSPQVIKS (97 aa)). 6 Kelch repeats span residues 252-297 (IELI…VMDN), 298-346 (IIYM…VDDE), 347-395 (YIYC…MLNG), 397-441 (IYVI…VHAG), 442-492 (KIYI…SVHN), and 494-540 (LYVG…PIKH).

In terms of assembly, interacts (via BTB domain) with host CUL3.

Its subcellular location is the host cytoplasm. Probable substrate-specific adapter of CUL3-containing E3 ubiquitin-protein ligases which mediate the ubiquitination and subsequent proteasomal degradation of host target proteins. This is Kelch repeat and BTB domain-containing protein 1 (KBTB1) from Mus musculus (Mouse).